The chain runs to 329 residues: Stimulator of interferon genes protein (329 aa).

The Cytoplasmic portion of the chain corresponds to 1-4 (MACV). Residues 5–25 (LAIGSILFVWILGKGKYSGAQ) traverse the membrane as a helical segment. A topological domain (lumenal) is located at residue Leu26. Residues 27–52 (IYRMATNFAISQGCCLVTCACELTEE) form a helical membrane-spanning segment. Topologically, residues 53-74 (IKHLHTRYNGHYWRALKASFNL) are cytoplasmic. Residues 75 to 88 (SCAAFVTAILCYVF) form a helical membrane-spanning segment. Topologically, residues 89–98 (YEPKLMASLP) are lumenal. Residues 99–116 (LTIDITLTLLSWLFCWIL) form a helical membrane-spanning segment. Over 117–329 (GIQGPTPATI…QQHSEEYSML (213 aa)) the chain is Cytoplasmic. The tract at residues 135–325 (LNVAHGLAWS…KHIRQQHSEE (191 aa)) is cyclic dinucleotide-binding domain (CBD). The 2',3'-cGAMP site is built by Ser144, Tyr149, Arg220, and Thr245. 3',3'-c-di-GMP contacts are provided by residues Ser144, Tyr149, 220-223 (RVFK), and Thr245.

It belongs to the STING family. As to quaternary structure, homodimer; forms a homodimer in absence of cyclic nucleotide (c-di-GMP or cGAMP). Homotetramer; in presence of cyclic nucleotide (c-di-GMP or cGAMP), forms tetramers and higher-order oligomers through side-by-side packing.

It is found in the endoplasmic reticulum membrane. Its subcellular location is the cytoplasm. It localises to the perinuclear region. The protein localises to the endoplasmic reticulum-Golgi intermediate compartment membrane. The protein resides in the golgi apparatus membrane. It is found in the cytoplasmic vesicle. Its subcellular location is the autophagosome membrane. It catalyses the reaction H(+)(in) = H(+)(out). Sensor of cytosolic DNA from bacteria and viruses that promotes autophagy. Acts by recognizing and binding cyclic GMP-AMP (cGAMP), a messenger produced by CGAS in response to DNA in the cytosol. Exhibits guanine base-specific ligand recognition: binds 3'-3'linked cGAMP, 2'-3' linked cGAMP and 3'-3' linked c-di-GMP with much greater affinity as compared to 3'-3' linked c-di-AMP. Following cGAMP-binding, promotes the formation of autophagosomes, leading to target cytosolic DNA for degradation by the lysosome. Promotes autophagy by acting as a proton channel that directs proton efflux from the Golgi to facilitate LC3 lipidation. Lacks the C-terminal tail (CTT) found in other vertebrate orthologs which is essential for interferon signaling. This is Stimulator of interferon genes protein from Xenopus tropicalis (Western clawed frog).